We begin with the raw amino-acid sequence, 414 residues long: Succinylornithine transaminase (414 aa).

Residue Lys260 is modified to N6-(pyridoxal phosphate)lysine.

It belongs to the class-III pyridoxal-phosphate-dependent aminotransferase family. AstC subfamily. Pyridoxal 5'-phosphate is required as a cofactor.

It carries out the reaction N(2)-succinyl-L-ornithine + 2-oxoglutarate = N-succinyl-L-glutamate 5-semialdehyde + L-glutamate. It participates in amino-acid degradation; L-arginine degradation via AST pathway; L-glutamate and succinate from L-arginine: step 3/5. Functionally, catalyzes the transamination of N(2)-succinylornithine and alpha-ketoglutarate into N(2)-succinylglutamate semialdehyde and glutamate. Can also act as an acetylornithine aminotransferase. The chain is Succinylornithine transaminase from Yersinia enterocolitica serotype O:8 / biotype 1B (strain NCTC 13174 / 8081).